The primary structure comprises 125 residues: Small ribosomal subunit protein uS12 (125 aa).

Asp89 bears the 3-methylthioaspartic acid mark. Residues Ala105 to Ala125 are disordered. A compositionally biased stretch (basic residues) spans Ala113–Ala125.

Belongs to the universal ribosomal protein uS12 family. In terms of assembly, part of the 30S ribosomal subunit. Contacts proteins S8 and S17. May interact with IF1 in the 30S initiation complex.

In terms of biological role, with S4 and S5 plays an important role in translational accuracy. Its function is as follows. Interacts with and stabilizes bases of the 16S rRNA that are involved in tRNA selection in the A site and with the mRNA backbone. Located at the interface of the 30S and 50S subunits, it traverses the body of the 30S subunit contacting proteins on the other side and probably holding the rRNA structure together. The combined cluster of proteins S8, S12 and S17 appears to hold together the shoulder and platform of the 30S subunit. The sequence is that of Small ribosomal subunit protein uS12 from Methylobacillus flagellatus (strain ATCC 51484 / DSM 6875 / VKM B-1610 / KT).